The sequence spans 109 residues: Major allergen I polypeptide chain 2 (109 aa).

The signal sequence occupies residues 1–17; the sequence is MRGALLVLALLVTQALG. The N-linked (GlcNAc...) asparagine glycan is linked to asparagine 50.

This sequence belongs to the secretoglobin family. Heterotetramer composed of two non-covalently linked disulfide-linked heterodimer of chains 1 and 2. As to expression, the long form is preferentially expressed in the salivary gland, while the short form is preferentially expressed in the skin.

The protein localises to the secreted. The sequence is that of Major allergen I polypeptide chain 2 (CH2) from Felis catus (Cat).